The sequence spans 265 residues: 1-(5-phosphoribosyl)-5-[(5-phosphoribosylamino)methylideneamino] imidazole-4-carboxamide isomerase (265 aa).

The Proton acceptor role is filled by aspartate 8. Aspartate 139 (proton donor) is an active-site residue.

The protein belongs to the HisA/HisF family.

The protein localises to the cytoplasm. It carries out the reaction 1-(5-phospho-beta-D-ribosyl)-5-[(5-phospho-beta-D-ribosylamino)methylideneamino]imidazole-4-carboxamide = 5-[(5-phospho-1-deoxy-D-ribulos-1-ylimino)methylamino]-1-(5-phospho-beta-D-ribosyl)imidazole-4-carboxamide. Its pathway is amino-acid biosynthesis; L-histidine biosynthesis; L-histidine from 5-phospho-alpha-D-ribose 1-diphosphate: step 4/9. The polypeptide is 1-(5-phosphoribosyl)-5-[(5-phosphoribosylamino)methylideneamino] imidazole-4-carboxamide isomerase (Herminiimonas arsenicoxydans).